Consider the following 153-residue polypeptide: Xanthine-guanine phosphoribosyltransferase (153 aa).

5-phospho-alpha-D-ribose 1-diphosphate contacts are provided by residues 37-38 (RG), R69, and 88-96 (DDLVDTGGT). A GMP-binding site is contributed by R69. Position 89 (D89) interacts with Mg(2+). Positions 92 and 135 each coordinate guanine. Xanthine contacts are provided by D92 and I135. Residues 92–96 (DTGGT) and 134–135 (WI) contribute to the GMP site.

It belongs to the purine/pyrimidine phosphoribosyltransferase family. XGPT subfamily. As to quaternary structure, homotetramer. Mg(2+) is required as a cofactor.

The protein localises to the cell inner membrane. It carries out the reaction GMP + diphosphate = guanine + 5-phospho-alpha-D-ribose 1-diphosphate. The catalysed reaction is XMP + diphosphate = xanthine + 5-phospho-alpha-D-ribose 1-diphosphate. It catalyses the reaction IMP + diphosphate = hypoxanthine + 5-phospho-alpha-D-ribose 1-diphosphate. The protein operates within purine metabolism; GMP biosynthesis via salvage pathway; GMP from guanine: step 1/1. It participates in purine metabolism; XMP biosynthesis via salvage pathway; XMP from xanthine: step 1/1. Its function is as follows. Purine salvage pathway enzyme that catalyzes the transfer of the ribosyl-5-phosphate group from 5-phospho-alpha-D-ribose 1-diphosphate (PRPP) to the N9 position of the 6-oxopurines guanine and xanthine to form the corresponding ribonucleotides GMP (guanosine 5'-monophosphate) and XMP (xanthosine 5'-monophosphate), with the release of PPi. To a lesser extent, also acts on hypoxanthine. This is Xanthine-guanine phosphoribosyltransferase from Proteus mirabilis (strain HI4320).